The chain runs to 60 residues: Large ribosomal subunit protein bL32 (60 aa).

Residues 1–21 form a disordered region; sequence MAVPRNRHSNARKNIRRSHDA.

The protein belongs to the bacterial ribosomal protein bL32 family.

The chain is Large ribosomal subunit protein bL32 from Chlamydia felis (strain Fe/C-56) (Chlamydophila felis).